Here is a 291-residue protein sequence, read N- to C-terminus: N-acetylmannosamine kinase (291 aa).

ATP-binding positions include 5–12 and 132–139; these read AIDIGGTK and GVGGGVVS. The Zn(2+) site is built by H156, C166, C168, and C173.

This sequence belongs to the ROK (NagC/XylR) family. NanK subfamily. As to quaternary structure, homodimer.

It catalyses the reaction an N-acyl-D-mannosamine + ATP = an N-acyl-D-mannosamine 6-phosphate + ADP + H(+). Its pathway is amino-sugar metabolism; N-acetylneuraminate degradation; D-fructose 6-phosphate from N-acetylneuraminate: step 2/5. Catalyzes the phosphorylation of N-acetylmannosamine (ManNAc) to ManNAc-6-P. In Escherichia coli O1:K1 / APEC, this protein is N-acetylmannosamine kinase.